A 40-amino-acid polypeptide reads, in one-letter code: Protamine-2 (40 aa).

Residues 1-40 (MPPRRKRVSSAPRRRRRTYRRTTAHKHQERPVHRRRRRRH) are disordered.

In terms of tissue distribution, testis.

The protein resides in the nucleus. Its subcellular location is the chromosome. Its function is as follows. Protamines substitute for histones in the chromatin of sperm during the haploid phase of spermatogenesis. They compact sperm DNA into a highly condensed, stable and inactive complex. This chain is Protamine-2 (PBP2), found in Bufo japonicus (Japanese common toad).